The primary structure comprises 538 residues: MEIKEISVPQQGVVADYMNGKKEIQSCFDYMLTEDAFKQRVQDLREREFFRQDLVTHLLEYNTKLQAGEATIQNVKALGDENTYVVIAGQQAGLLTGPLYTIHKIISVLQLAKEKEESLGVKVVPVFWIAGEDHDMDEINHTFVTKNKKIKKTIFHDRNPKKASASESELSLEDCRKWIEEIFKTYPETNFTKDVLQFVDDSLRKSNTYVDFFGHLIMKMFVNSGLILVDSHHPELRKLEVPFFKQIVSKYKEVQEGLLNQQEVIKELGYKPIIETKSNAVHIFMEIDNERVLLEDNQGEFVGKDGTYSFSYEELIEEMERSPERFSNNVVTRPLMQEYVFPTLAFIGGPGELAYWSELQQVFHTIGFRMPPVVPRITITYLERDIATDLHDLQLQESDPFLNNVDKLRENWLSNQIEEPIDERFVEAKKEIMNIHTSLQQFVKEIDPGLSAFAGKNEFKINEQIELLERMLKRNVEKKHEVELNKFRRIQFALRPLGAPQERVWNVCYYLNQFGLDFVDHVMEKTFSWNGKHHVIKL.

Residues 460 to 484 are a coiled coil; sequence KINEQIELLERMLKRNVEKKHEVEL.

This sequence belongs to the BshC family.

In terms of biological role, involved in bacillithiol (BSH) biosynthesis. May catalyze the last step of the pathway, the addition of cysteine to glucosamine malate (GlcN-Mal) to generate BSH. The protein is Putative cysteine ligase BshC of Bacillus cereus (strain ZK / E33L).